The following is a 101-amino-acid chain: Urease subunit beta (101 aa).

The protein belongs to the urease beta subunit family. In terms of assembly, heterotrimer of UreA (gamma), UreB (beta) and UreC (alpha) subunits. Three heterotrimers associate to form the active enzyme.

Its subcellular location is the cytoplasm. The enzyme catalyses urea + 2 H2O + H(+) = hydrogencarbonate + 2 NH4(+). Its pathway is nitrogen metabolism; urea degradation; CO(2) and NH(3) from urea (urease route): step 1/1. The chain is Urease subunit beta from Cereibacter sphaeroides (strain ATCC 17025 / ATH 2.4.3) (Rhodobacter sphaeroides).